A 565-amino-acid chain; its full sequence is MAQRIFTLILLLCSTSVFAGLFDAPGRSQFVPADQAFAFDFQQNQHDLNLTWQIKDGYYLYRKQIRITPEHAKIADVQLPQGVWHEDEFYGKSEIYRDRLTLPVTINQASAGATLTVTYQGCADAGFCYPPETKTVPLSEVVANNEASQPVSVPQQEQPTAQLPFSALWALLIGIGIAFTPCVLPMYPLISGIVLGGKQRLSTARALLLTFIYVQGMALTYTALGLVVAAAGLQFQAALQHPYVLIGLAIVFTLLAMSMFGLFTLQLPSSLQTRLTLMSNRQQGGSPGGVFIMGAIAGLICSPCTTAPLSAILLYIAQSGNMWLGGGTLYLYALGMGLPLMLITVFGNRLLPKSGPWMEQVKTAFGFVILALPVFLLERVIGDIWGLRLWSALGVAFFGWAFITSLQAKRGWMRVVQIILLAAALVSVRPLQDWAFGETHTAQTQTHLNFTQIKTVDELNQALVEAKGKPVMLDLYADWCVACKEFEKYTFSDPQVQKALADTVLLQANVTANDAQDVALLKHLNVLGLPTILFFDGQGQEHPQARVTGFMDAETFSAHLRDRQP.

The signal sequence occupies residues 1–19 (MAQRIFTLILLLCSTSVFA). 2 disulfide bridges follow: cysteine 122-cysteine 128 and cysteine 182-cysteine 304. Helical transmembrane passes span 163 to 183 (LPFS…TPCV), 208 to 228 (LLTF…GLVV), 243 to 263 (YVLI…FGLF), 289 to 309 (GVFI…TAPL), 323 to 343 (WLGG…LMLI), 357 to 377 (WMEQ…VFLL), and 384 to 404 (IWGL…AFIT). Positions 434–565 (WAFGETHTAQ…FSAHLRDRQP (132 aa)) constitute a Thioredoxin domain. The cysteines at positions 480 and 483 are disulfide-linked.

This sequence belongs to the thioredoxin family. DsbD subfamily.

The protein resides in the cell inner membrane. The enzyme catalyses [protein]-dithiol + NAD(+) = [protein]-disulfide + NADH + H(+). The catalysed reaction is [protein]-dithiol + NADP(+) = [protein]-disulfide + NADPH + H(+). In terms of biological role, required to facilitate the formation of correct disulfide bonds in some periplasmic proteins and for the assembly of the periplasmic c-type cytochromes. Acts by transferring electrons from cytoplasmic thioredoxin to the periplasm. This transfer involves a cascade of disulfide bond formation and reduction steps. This Escherichia coli O6:K15:H31 (strain 536 / UPEC) protein is Thiol:disulfide interchange protein DsbD.